Here is a 373-residue protein sequence, read N- to C-terminus: Protodeoxyviolaceinate monooxygenase (373 aa).

2–20 (KILVIGAGPAGLVFASQLK) is a binding site for FAD.

Requires FAD as cofactor.

The enzyme catalyses protodeoxyviolaceinate + NADH + O2 + H(+) = protoviolaceinate + NAD(+) + H2O. It carries out the reaction protodeoxyviolaceinate + NADPH + O2 + H(+) = protoviolaceinate + NADP(+) + H2O. It participates in pigment biosynthesis; violacein biosynthesis. Functionally, catalyzes the oxygenation of the 6-position of protodeoxyviolaceinate to form proviolacein. The protein is Protodeoxyviolaceinate monooxygenase (vioD) of Chromobacterium violaceum (strain ATCC 12472 / DSM 30191 / JCM 1249 / CCUG 213 / NBRC 12614 / NCIMB 9131 / NCTC 9757 / MK).